Reading from the N-terminus, the 373-residue chain is Queuine tRNA-ribosyltransferase (373 aa).

The active-site Proton acceptor is the Asp94. Substrate is bound by residues 94–98 (DSGGF), Asp148, Gln191, and Gly218. The RNA binding stretch occupies residues 249–255 (GVGTPDY). Asp268 (nucleophile) is an active-site residue. The interval 273–277 (TRIGR) is RNA binding; important for wobble base 34 recognition. Residues Cys306, Cys308, Cys311, and His337 each coordinate Zn(2+).

It belongs to the queuine tRNA-ribosyltransferase family. In terms of assembly, homodimer. Within each dimer, one monomer is responsible for RNA recognition and catalysis, while the other monomer binds to the replacement base PreQ1. Requires Zn(2+) as cofactor.

It catalyses the reaction 7-aminomethyl-7-carbaguanine + guanosine(34) in tRNA = 7-aminomethyl-7-carbaguanosine(34) in tRNA + guanine. It functions in the pathway tRNA modification; tRNA-queuosine biosynthesis. Catalyzes the base-exchange of a guanine (G) residue with the queuine precursor 7-aminomethyl-7-deazaguanine (PreQ1) at position 34 (anticodon wobble position) in tRNAs with GU(N) anticodons (tRNA-Asp, -Asn, -His and -Tyr). Catalysis occurs through a double-displacement mechanism. The nucleophile active site attacks the C1' of nucleotide 34 to detach the guanine base from the RNA, forming a covalent enzyme-RNA intermediate. The proton acceptor active site deprotonates the incoming PreQ1, allowing a nucleophilic attack on the C1' of the ribose to form the product. After dissociation, two additional enzymatic reactions on the tRNA convert PreQ1 to queuine (Q), resulting in the hypermodified nucleoside queuosine (7-(((4,5-cis-dihydroxy-2-cyclopenten-1-yl)amino)methyl)-7-deazaguanosine). The protein is Queuine tRNA-ribosyltransferase of Ruminiclostridium cellulolyticum (strain ATCC 35319 / DSM 5812 / JCM 6584 / H10) (Clostridium cellulolyticum).